The following is a 153-amino-acid chain: Regulator of sigma D (153 aa).

Belongs to the Rsd/AlgQ family. As to quaternary structure, interacts with RpoD.

The protein localises to the cytoplasm. In terms of biological role, binds RpoD and negatively regulates RpoD-mediated transcription activation by preventing the interaction between the primary sigma factor RpoD with the catalytic core of the RNA polymerase and with promoter DNA. May be involved in replacement of the RNA polymerase sigma subunit from RpoD to RpoS during the transition from exponential growth to the stationary phase. The protein is Regulator of sigma D of Pectobacterium carotovorum subsp. carotovorum (strain PC1).